A 156-amino-acid chain; its full sequence is MSRRSTAEKETAKSDPIYRNRLVNMLVNRILRHGKKSLAYRILYRAMKNIQQKTEKNPLSVLRQAIRGVTPNVTVKARRVGGSTYQVPVEIRSTQGKALAIRWLLGASRKRPPGRNMAFKLSYELMDAARGNGNAIRKKEETHRMAEANRAFAHFR.

This sequence belongs to the universal ribosomal protein uS7 family. In terms of assembly, part of the 30S ribosomal subunit.

It is found in the plastid. It localises to the chloroplast. Its function is as follows. One of the primary rRNA binding proteins, it binds directly to 16S rRNA where it nucleates assembly of the head domain of the 30S subunit. In Cycas revoluta (Sago palm), this protein is Small ribosomal subunit protein uS7c (rps7).